A 264-amino-acid chain; its full sequence is Probable transcriptional regulatory protein PPA1157 (264 aa).

The protein belongs to the TACO1 family.

It localises to the cytoplasm. The chain is Probable transcriptional regulatory protein PPA1157 from Cutibacterium acnes (strain DSM 16379 / KPA171202) (Propionibacterium acnes).